The chain runs to 241 residues: MTVLIIGMGNIGKKLVELGNFEKIYAYDRISKDIPGVVRLDEFQVPSDVSTVVECASPEAVKEYSLQILKNPVNYIIISTSAFADEVFRERFFSELKNSPARVFFPSGAIGGLDVLSSIKDFVKNVRIETIKPPKSLGLDLKGKTVVFEGSVEEASKLFPRNINVASTIGLIVGFEKVKVTIVADPAMDHNIHIVRISSAIGNYEFKIENIPSPENPKTSMLTVYSILRTLRNLESKIIFG.

NAD(+)-binding positions include 10 to 11 (NI), Asp28, 56 to 57 (AS), 63 to 64 (EY), 78 to 79 (IS), Ala109, and Asn164. The active site involves His193.

The protein belongs to the L-aspartate dehydrogenase family. Homodimer.

The enzyme catalyses L-aspartate + NADP(+) + H2O = oxaloacetate + NH4(+) + NADPH + H(+). It carries out the reaction L-aspartate + NAD(+) + H2O = oxaloacetate + NH4(+) + NADH + H(+). It functions in the pathway cofactor biosynthesis; NAD(+) biosynthesis; iminoaspartate from L-aspartate (dehydrogenase route): step 1/1. With respect to regulation, competitively inhibited by L-malate and NH(4)(+). Specifically catalyzes the NAD or NADP-dependent dehydrogenation of L-aspartate to iminoaspartate. Does not show aspartate oxidase activity. Is also able to catalyze the reverse reaction, i.e. the reductive amination of oxaloacetate. This is L-aspartate dehydrogenase from Thermotoga maritima (strain ATCC 43589 / DSM 3109 / JCM 10099 / NBRC 100826 / MSB8).